The sequence spans 332 residues: Centrosomal AT-AC splicing factor (332 aa).

The segment at 1 to 169 (MAPAQRCPLC…QSRQEVVRSV (169 aa)) is required for centrosome location. Position 31 is an N6-acetyllysine; by NAT10 (lysine 31). Residues 137-168 (LDSYEEKEDKVIKEMAAQIREVEQSRQEVVRS) adopt a coiled-coil conformation. Residues 169-213 (VLEPQAVPDPEEGSSAPRSWKGMNSQVASSLQQPSNLDLPPAPEL) form a disordered region. Polar residues predominate over residues 190–204 (GMNSQVASSLQQPSN).

Interacts with SASS6; the interaction increases with CENATAC acetylation. In terms of processing, acetylated. Acetylation oscillates throughout the cell cycle, and the acetylation state at Lys-31 is regulated by the deacetylase SIRT1 and the acetyltransferase NAT10. Deacetylated CENATAC is responsible for its centrosome targeting, and acetylated CENATAC promotes SASS6 degradation by enhancing the binding affinity of SASS6 for APC/C E3 ubiquitin-protein ligase complex/FZR1.

Its subcellular location is the cytoplasm. It is found in the cytoskeleton. The protein resides in the microtubule organizing center. It localises to the centrosome. In terms of biological role, component of the minor spliceosome that promotes splicing of a specific, rare minor intron subtype. Negative regulator of centrosome duplication. Constrains centriole number by modulating the degradation of the centrosome-duplication-associated protein SASS6 in an acetylation-dependent manner. SIRT1 deacetylates CENATAC in G1 phase, allowing for SASS6 accumulation on the centrosome and subsequent procentriole assembly. The CENATAC acetylation level is restored in mitosis by NAT10, promoting SASS6 proteasome degradation by facilitating SASS6 binding to APC/C E3 ubiquitin-protein ligase complex/FZR1. In Homo sapiens (Human), this protein is Centrosomal AT-AC splicing factor.